Here is a 504-residue protein sequence, read N- to C-terminus: Bacterial leucyl aminopeptidase (504 aa).

Residues 1 to 21 form the signal peptide; it reads MKYTKTLLAMVLSATFCQAYA. Residues 22–106 constitute a propeptide that is removed on maturation; that stretch reads EDKVWISIGA…AMPTTLASFV (85 aa). Positions 203, 223, 258, and 285 each coordinate Zn(2+). Residues Cys-329 and Cys-333 are joined by a disulfide bond. His-362 provides a ligand contact to Zn(2+). A propeptide spans 406–504 (removed in mature form); sequence LEDGVPVTDL…SGASLKASTF (99 aa).

Belongs to the peptidase M28 family. M28E subfamily. The cofactor is Zn(2+).

It localises to the secreted. It carries out the reaction Release of an N-terminal amino acid, preferentially leucine, but not glutamic or aspartic acids.. The chain is Bacterial leucyl aminopeptidase from Vibrio proteolyticus (Aeromonas proteolytica).